Here is a 166-residue protein sequence, read N- to C-terminus: Disulfide bond formation protein B (166 aa).

Residues 1–11 lie on the Cytoplasmic side of the membrane; that stretch reads MIALPRNRRPL. A helical transmembrane segment spans residues 12–28; sequence FLAVFAYCAALLAFGLY. Over 29 to 46 the chain is Periplasmic; that stretch reads LQHYQGIEPCPMCIMQRY. A disulfide bridge links Cys38 with Cys41. A helical transmembrane segment spans residues 47–63; the sequence is AFALVGVIALVAGLHGP. At 64–70 the chain is on the cytoplasmic side; that stretch reads RGAGVRV. The chain crosses the membrane as a helical span at residues 71–87; sequence YGGLLLLTALAGGSVAA. Over 88–143 the chain is Periplasmic; the sequence is RQTWMQLYPPEIPECGPGLEYMLESFPLTSALPMIFRGAGDCSAIDWTFLGLSLAN. Cys102 and Cys129 are disulfide-bonded. A helical membrane pass occupies residues 144-162; that stretch reads WSLLNFGAAALLALWLLFG. The Cytoplasmic segment spans residues 163 to 166; sequence RRVR.

Belongs to the DsbB family.

It localises to the cell inner membrane. Its function is as follows. Required for disulfide bond formation in some periplasmic proteins. Acts by oxidizing the DsbA protein. This chain is Disulfide bond formation protein B, found in Azoarcus sp. (strain BH72).